A 310-amino-acid polypeptide reads, in one-letter code: Methionyl-tRNA formyltransferase (310 aa).

109–112 (SLLP) is a (6S)-5,6,7,8-tetrahydrofolate binding site. Residues 283-310 (QPQGKKAMPAADWARGARIGDGERFGDD) are disordered. A compositionally biased stretch (basic and acidic residues) spans 300-310 (RIGDGERFGDD).

The protein belongs to the Fmt family.

It catalyses the reaction L-methionyl-tRNA(fMet) + (6R)-10-formyltetrahydrofolate = N-formyl-L-methionyl-tRNA(fMet) + (6S)-5,6,7,8-tetrahydrofolate + H(+). Its function is as follows. Attaches a formyl group to the free amino group of methionyl-tRNA(fMet). The formyl group appears to play a dual role in the initiator identity of N-formylmethionyl-tRNA by promoting its recognition by IF2 and preventing the misappropriation of this tRNA by the elongation apparatus. The protein is Methionyl-tRNA formyltransferase of Thermobifida fusca (strain YX).